We begin with the raw amino-acid sequence, 690 residues long: Protein SPT2 homolog (690 aa).

Residues 1 to 579 form an important for interaction with DNA region; sequence MDFHNILVMA…PGHRPVFRPQ (579 aa). The stretch at 40–82 forms a coiled coil; that stretch reads ESAAVQAFLRRKEEEKRKKELEEKRKKERLLAKRIELKHDRKA. 2 disordered regions span residues 105-167 and 186-619; these read PKKR…APAP and EIKV…QEEI. Positions 186–228 are enriched in basic and acidic residues; that stretch reads EIKVVKKIEERPRTAEELREREYLERKNKRVETQKKKSEKEVK. Positions 229–243 are enriched in low complexity; it reads SAGISSSSKKATSLK. 2 stretches are compositionally biased toward basic and acidic residues: residues 244-259 and 271-285; these read ECAD…DKHA and TDKK…EKHS. The segment covering 369–380 has biased composition (polar residues); that stretch reads HETNSSAKRPSS. The segment covering 383 to 396 has biased composition (gly residues); the sequence is GKGGSGHPAGGSSA. The span at 397–442 shows a compositional bias: low complexity; that stretch reads GPGRSSSNSGTGPGRPGSVSSPGPGRQGSSSAAGPGRPSSSSSLGP. Gly residues-rich tracts occupy residues 443–457, 465–477, and 489–521; these read GRLG…GRPG, GRPG…GPGR, and LGSG…GPGR. A compositionally biased stretch (polar residues) spans 545–565; the sequence is VSETISSKNLVTRPSNGQING. An important for interaction with histones region spans residues 580–690; sequence GIGRPPVGYK…KRQSKKLRTR (111 aa). Acidic residues predominate over residues 593-617; that stretch reads DDDDDDDEYDSEMDDFIEDEGEPQE. The stretch at 650–690 forms a coiled coil; sequence REQQKEEARSLRLGVQEDLEELRREEEELKRKRQSKKLRTR.

Belongs to the SPT2 family. In terms of assembly, interacts with POLR1A. Interacts with histones. Interacts with a heterotetrameric complex formed by histone H3 and H4, especially when the histone tetramer is not bound to DNA.

Its subcellular location is the nucleus. It localises to the nucleolus. Its function is as follows. Histone chaperone that stabilizes pre-existing histone tetramers and regulates replication-independent histone exchange on chromatin. Required for normal chromatin refolding in the coding region of transcribed genes, and for the suppression of spurious transcription. Binds DNA and histones and promotes nucleosome assembly (in vitro). Modulates RNA polymerase 1-mediated transcription. Required for optimal growth in the presence of the DNA damaging agents actinomycin D or mitomycin C (in vitro). Facilitates formation of tetrameric histone complexes containing histone H3 and H4. Modulates RNA polymerase 1-mediated transcription. Binds DNA, with a preference for branched DNA species, such as Y-form DNA and Holliday junction DNA. This is Protein SPT2 homolog (SPTY2D1) from Gallus gallus (Chicken).